Reading from the N-terminus, the 580-residue chain is Malto-oligosyltrehalose trehalohydrolase (580 aa).

Residues 56–88 (LPDPRSARQPDGVHARSQRWEPPGQFGAARTDT) form a disordered region. Residues 60–69 (RSARQPDGVH) show a composition bias toward basic and acidic residues. Residue 245–250 (RLDAVH) coordinates substrate. The active-site Nucleophile is Asp-247. The Proton donor role is filled by Glu-284. Residues 309-313 (DDIHH) and 379-384 (HDQVGN) each bind substrate.

This sequence belongs to the glycosyl hydrolase 13 family.

It localises to the cytoplasm. The enzyme catalyses hydrolysis of (1-&gt;4)-alpha-D-glucosidic linkage in 4-alpha-D-[(1-&gt;4)-alpha-D-glucanosyl]n trehalose to yield trehalose and (1-&gt;4)-alpha-D-glucan.. The protein operates within glycan biosynthesis; trehalose biosynthesis. In terms of biological role, is involved in the biosynthesis of trehalose but not in that of capsular glucan and glycogen. This chain is Malto-oligosyltrehalose trehalohydrolase (treZ), found in Mycobacterium tuberculosis (strain CDC 1551 / Oshkosh).